A 140-amino-acid polypeptide reads, in one-letter code: Putative nickel-responsive regulator (140 aa).

4 residues coordinate Ni(2+): histidine 81, histidine 92, histidine 94, and cysteine 100.

The protein belongs to the transcriptional regulatory CopG/NikR family. The cofactor is Ni(2+).

Its function is as follows. Transcriptional regulator. The protein is Putative nickel-responsive regulator of Methanococcoides burtonii (strain DSM 6242 / NBRC 107633 / OCM 468 / ACE-M).